The chain runs to 229 residues: MPTSVLELKSVDRHYVQGQNTLTILKAADFTLAPGEMVALVAPSGTGKSTLLHIAGLLEHPDGGDVIVNGQPCAGLADDRRTEIRRKEIGFVYQFHHLLPEFTAIENVMMPQLIAGLSPAEARERAGQLLAYMKLGSRTEHRPSELSGGEQQRVAIARAVANAPLVLLADEPTGNLDPVTAGYVFEALEAIVRHSGLAALIATHNEELAARMDRRVTLSDGRVVELPAK.

In terms of domain architecture, ABC transporter spans 6–226 (LELKSVDRHY…TLSDGRVVEL (221 aa)). 42 to 49 (APSGTGKS) is a binding site for ATP.

It belongs to the ABC transporter superfamily. Lipoprotein translocase (TC 3.A.1.125) family. The complex is composed of two ATP-binding proteins (LolD) and two transmembrane proteins (LolC and LolE).

Its subcellular location is the cell inner membrane. In terms of biological role, part of the ABC transporter complex LolCDE involved in the translocation of mature outer membrane-directed lipoproteins, from the inner membrane to the periplasmic chaperone, LolA. Responsible for the formation of the LolA-lipoprotein complex in an ATP-dependent manner. This Chelativorans sp. (strain BNC1) protein is Lipoprotein-releasing system ATP-binding protein LolD.